A 698-amino-acid polypeptide reads, in one-letter code: Polyribonucleotide nucleotidyltransferase (698 aa).

Residues aspartate 490 and aspartate 496 each contribute to the Mg(2+) site. Positions 558 to 617 (PVIYTMRIPQDKIGALIGPGGKNIKRITETTDTKIDINDDGVVQIAAVNGDKLAMAKAEI) constitute a KH domain. In terms of domain architecture, S1 motif spans 627-695 (NKIYKGKVVS…NNGKVRLSRK (69 aa)).

It belongs to the polyribonucleotide nucleotidyltransferase family. Mg(2+) serves as cofactor.

The protein localises to the cytoplasm. The catalysed reaction is RNA(n+1) + phosphate = RNA(n) + a ribonucleoside 5'-diphosphate. Involved in mRNA degradation. Catalyzes the phosphorolysis of single-stranded polyribonucleotides processively in the 3'- to 5'-direction. The polypeptide is Polyribonucleotide nucleotidyltransferase (Elusimicrobium minutum (strain Pei191)).